The chain runs to 241 residues: MAGHSKWANIKHKKAAQDAKRGKIFTRLIKEITVAARLGGGDPGSNPRLRLAMDKAFGHNMPKDNVERAIKRGCGELEGVNYEEIRYEGYGVSGAAVMVDCMTDNRTRTVADVRHAFTKHGGNLGTDGSVSYLFTHCGQLLFAPDIDEARLLEVALNAGAEDVIDNDDGSLEVITSPDTFVAVRDELEKAAFKAELAEVTWKPENEILLQGDDAAKMQKLLDALEDIDDVQDVYTTAVLDI.

The protein belongs to the TACO1 family.

The protein localises to the cytoplasm. The polypeptide is Probable transcriptional regulatory protein Neut_0281 (Nitrosomonas eutropha (strain DSM 101675 / C91 / Nm57)).